Consider the following 538-residue polypeptide: ATP-dependent rRNA helicase RRP3 (538 aa).

Residues 1 to 11 are compositionally biased toward basic residues; the sequence is MSSAKRVKLSH. Residues 1–112 form a disordered region; the sequence is MSSAKRVKLS…SKEETPTKSF (112 aa). The span at 34-47 shows a compositional bias: low complexity; that stretch reads KKITQAPKAAAPIK. Positions 53-85 are enriched in acidic residues; it reads AEEDDDDDDKDDKDEEDEEQNDDSSDEASENDD. A compositionally biased stretch (basic and acidic residues) spans 92-112; sequence EATKEGQTELPSKEETPTKSF. Residues 110-138 carry the Q motif motif; it reads KSFRDLGIVEPLCEACEALKFKKPTPIQE. One can recognise a Helicase ATP-binding domain in the interval 141–312; it reads IPLALQGRDV…RASLRDPLKV (172 aa). ATP is bound at residue 154 to 161; sequence AETGSGKT. Residues 260–263 carry the DEAD box motif; it reads DEAD. A Helicase C-terminal domain is found at 336–486; sequence HKDVYLIYLA…LFQPDKEEVM (151 aa). A compositionally biased stretch (basic and acidic residues) spans 498 to 512; the sequence is HAREEMKALHEDRGK. Residues 498-538 form a disordered region; that stretch reads HAREEMKALHEDRGKKGAVLKGRKRGSATKRRHDDMDAEEG. A compositionally biased stretch (basic residues) spans 513-528; it reads KGAVLKGRKRGSATKR.

This sequence belongs to the DEAD box helicase family. DDX47/RRP3 subfamily. In terms of assembly, interacts with the SSU processome.

Its subcellular location is the nucleus. The enzyme catalyses ATP + H2O = ADP + phosphate + H(+). Its function is as follows. ATP-dependent rRNA helicase required for pre-ribosomal RNA processing. Involved in the maturation of the 35S-pre-rRNA and to its cleavage to mature 18S rRNA. In Pyricularia oryzae (strain 70-15 / ATCC MYA-4617 / FGSC 8958) (Rice blast fungus), this protein is ATP-dependent rRNA helicase RRP3.